Consider the following 495-residue polypeptide: Probable staphylococcal-like nuclease CAN4 (495 aa).

Residue glycine 2 is the site of N-myristoyl glycine attachment. Residue cysteine 11 is the site of S-palmitoyl cysteine attachment. 2 disordered regions span residues 45 to 68 and 81 to 101; these read DLQV…RPAL and LQVP…PPRP. Pro residues predominate over residues 50 to 66; it reads LSPPPPSTRQQQPPPRP. A TNase-like domain is found at 297–470; that stretch reads KTLPVNAKCI…RDARQGLWAY (174 aa). Aspartate 310 contributes to the Ca(2+) binding site. Residue arginine 377 is part of the active site. Aspartate 382 is a binding site for Ca(2+). Active-site residues include glutamate 385 and arginine 419.

It belongs to the thermonuclease family. Ca(2+) serves as cofactor.

Its subcellular location is the cell membrane. Functionally, enzyme that catalyzes the hydrolysis of both DNA and RNA at the 5' position of the phosphodiester bond. The sequence is that of Probable staphylococcal-like nuclease CAN4 from Oryza sativa subsp. japonica (Rice).